The sequence spans 391 residues: Arrestin-C (391 aa).

The segment covering 369 to 379 has biased composition (basic and acidic residues); sequence ARQEPGGREES. Positions 369-391 are disordered; sequence ARQEPGGREESQEALAAEGDEGS.

It belongs to the arrestin family. Homodimer; disulfide-linked in response to retinal illumination. Interacts with CXCR4; the interaction is dependent on the C-terminal phosphorylation of CXCR4 and modulates the calcium ion mobilization activity of CXCR4. Interacts with GPR84.

The protein localises to the photoreceptor inner segment. Its subcellular location is the cell projection. It is found in the cilium. It localises to the photoreceptor outer segment. In terms of biological role, may play a role in an as yet undefined retina-specific signal transduction. Could bind to photoactivated-phosphorylated red/green opsins. This chain is Arrestin-C (ARR3), found in Sus scrofa (Pig).